Reading from the N-terminus, the 375-residue chain is Quinolinate synthase (375 aa).

Residues H47 and S64 each coordinate iminosuccinate. C110 provides a ligand contact to [4Fe-4S] cluster. Residues 144 to 146 (YVN) and S165 contribute to the iminosuccinate site. C235 provides a ligand contact to [4Fe-4S] cluster. Residues 261–263 (HPE) and T278 contribute to the iminosuccinate site. C325 is a [4Fe-4S] cluster binding site.

Belongs to the quinolinate synthase family. Type 3 subfamily. It depends on [4Fe-4S] cluster as a cofactor.

It localises to the cytoplasm. The enzyme catalyses iminosuccinate + dihydroxyacetone phosphate = quinolinate + phosphate + 2 H2O + H(+). The protein operates within cofactor biosynthesis; NAD(+) biosynthesis; quinolinate from iminoaspartate: step 1/1. Its function is as follows. Catalyzes the condensation of iminoaspartate with dihydroxyacetone phosphate to form quinolinate. The chain is Quinolinate synthase from Herpetosiphon aurantiacus (strain ATCC 23779 / DSM 785 / 114-95).